Reading from the N-terminus, the 21-residue chain is Cupiennin-6e (21 aa).

Serine amide is present on Ser21.

Expressed by the venom gland.

The protein localises to the secreted. The chain is Cupiennin-6e from Cupiennius salei (American wandering spider).